We begin with the raw amino-acid sequence, 481 residues long: Cobyric acid synthase (481 aa).

The GATase cobBQ-type domain maps to 248 to 435 (NTVIAVPMLP…LHGLFHGGAF (188 aa)). Cys329 acts as the Nucleophile in catalysis. The active site involves His427.

The protein belongs to the CobB/CobQ family. CobQ subfamily.

It participates in cofactor biosynthesis; adenosylcobalamin biosynthesis. Its function is as follows. Catalyzes amidations at positions B, D, E, and G on adenosylcobyrinic A,C-diamide. NH(2) groups are provided by glutamine, and one molecule of ATP is hydrogenolyzed for each amidation. The polypeptide is Cobyric acid synthase (Granulibacter bethesdensis (strain ATCC BAA-1260 / CGDNIH1)).